The following is an 86-amino-acid chain: Large ribosomal subunit protein bL27 (86 aa).

The tract at residues 1–22 is disordered; sequence MATKKAGGSSRNGRDSAGRRLG.

Belongs to the bacterial ribosomal protein bL27 family.

The polypeptide is Large ribosomal subunit protein bL27 (Rickettsia peacockii (strain Rustic)).